Reading from the N-terminus, the 472-residue chain is Ribulose bisphosphate carboxylase large chain 1 (472 aa).

Positions 115 and 165 each coordinate substrate. Lysine 167 serves as the catalytic Proton acceptor. Lysine 169 lines the substrate pocket. Mg(2+) is bound by residues lysine 193, aspartate 195, and glutamate 196. An N6-carboxylysine modification is found at lysine 193. Residue histidine 286 is the Proton acceptor of the active site. The substrate site is built by arginine 287, histidine 319, and serine 371.

This sequence belongs to the RuBisCO large chain family. Type I subfamily. As to quaternary structure, heterohexadecamer of 8 large chains and 8 small chains. Mg(2+) serves as cofactor.

The catalysed reaction is 2 (2R)-3-phosphoglycerate + 2 H(+) = D-ribulose 1,5-bisphosphate + CO2 + H2O. It catalyses the reaction D-ribulose 1,5-bisphosphate + O2 = 2-phosphoglycolate + (2R)-3-phosphoglycerate + 2 H(+). In terms of biological role, ruBisCO catalyzes two reactions: the carboxylation of D-ribulose 1,5-bisphosphate, the primary event in carbon dioxide fixation, as well as the oxidative fragmentation of the pentose substrate. Both reactions occur simultaneously and in competition at the same active site. The chain is Ribulose bisphosphate carboxylase large chain 1 from Hydrogenovibrio marinus.